The chain runs to 364 residues: Probable dual-specificity RNA methyltransferase RlmN (364 aa).

The Proton acceptor role is filled by Glu107. A Radical SAM core domain is found at 113-346 (HEYGNSVCVT…ATIRREQGAD (234 aa)). Cys120 and Cys351 form a disulfide bridge. The [4Fe-4S] cluster site is built by Cys127, Cys131, and Cys134. Residues 177-178 (GE), Ser209, 232-234 (SLH), and Asn308 each bind S-adenosyl-L-methionine. The active-site S-methylcysteine intermediate is Cys351.

This sequence belongs to the radical SAM superfamily. RlmN family. [4Fe-4S] cluster serves as cofactor.

The protein localises to the cytoplasm. It catalyses the reaction adenosine(2503) in 23S rRNA + 2 reduced [2Fe-2S]-[ferredoxin] + 2 S-adenosyl-L-methionine = 2-methyladenosine(2503) in 23S rRNA + 5'-deoxyadenosine + L-methionine + 2 oxidized [2Fe-2S]-[ferredoxin] + S-adenosyl-L-homocysteine. The catalysed reaction is adenosine(37) in tRNA + 2 reduced [2Fe-2S]-[ferredoxin] + 2 S-adenosyl-L-methionine = 2-methyladenosine(37) in tRNA + 5'-deoxyadenosine + L-methionine + 2 oxidized [2Fe-2S]-[ferredoxin] + S-adenosyl-L-homocysteine. Its function is as follows. Specifically methylates position 2 of adenine 2503 in 23S rRNA and position 2 of adenine 37 in tRNAs. Confers resistance to some classes of antibiotics. In Staphylococcus saprophyticus subsp. saprophyticus (strain ATCC 15305 / DSM 20229 / NCIMB 8711 / NCTC 7292 / S-41), this protein is Probable dual-specificity RNA methyltransferase RlmN.